A 490-amino-acid polypeptide reads, in one-letter code: Adenylosuccinate synthetase, chloroplastic (490 aa).

Residues 1–45 (MSLSSLTLDSNPRFAVGGPYHRRYPPLHHPRSFVSCSAKRPAVSA) constitute a chloroplast transit peptide. Ser-46 is subject to N-acetylserine. Residues 77–83 (GDEGKGK) and 105–107 (GHT) contribute to the GTP site. Asp-78 functions as the Proton acceptor in the catalytic mechanism. 2 residues coordinate Mg(2+): Asp-78 and Gly-105. Residues 78–81 (DEGK), 103–106 (NAGH), Thr-195, Arg-209, Gln-289, Thr-304, and Arg-368 contribute to the IMP site. The Proton donor role is filled by His-106. A substrate-binding site is contributed by 364–370 (TTTGRPR). Residues Arg-370, 396 to 398 (KLD), and 479 to 481 (GIG) contribute to the GTP site.

The protein belongs to the adenylosuccinate synthetase family. Homodimer. It depends on Mg(2+) as a cofactor.

The protein resides in the plastid. Its subcellular location is the chloroplast. It catalyses the reaction IMP + L-aspartate + GTP = N(6)-(1,2-dicarboxyethyl)-AMP + GDP + phosphate + 2 H(+). Its pathway is purine metabolism; AMP biosynthesis via de novo pathway; AMP from IMP: step 1/2. Plays an important role in the de novo pathway and in the salvage pathway of purine nucleotide biosynthesis. Catalyzes the first committed step in the biosynthesis of AMP from IMP. The polypeptide is Adenylosuccinate synthetase, chloroplastic (Arabidopsis thaliana (Mouse-ear cress)).